The sequence spans 684 residues: DNA ligase (684 aa).

Residues 48–52 (DYEYD), 97–98 (SL), and Glu129 contribute to the NAD(+) site. Lys131 functions as the N6-AMP-lysine intermediate in the catalytic mechanism. NAD(+) contacts are provided by Arg152, Glu189, Lys310, and Lys334. 4 residues coordinate Zn(2+): Cys429, Cys432, Cys447, and Cys452. In terms of domain architecture, BRCT spans 609–684 (AQEGSLSGMS…ISWEELQAMI (76 aa)).

It belongs to the NAD-dependent DNA ligase family. LigA subfamily. The cofactor is Mg(2+). Requires Mn(2+) as cofactor.

The enzyme catalyses NAD(+) + (deoxyribonucleotide)n-3'-hydroxyl + 5'-phospho-(deoxyribonucleotide)m = (deoxyribonucleotide)n+m + AMP + beta-nicotinamide D-nucleotide.. In terms of biological role, DNA ligase that catalyzes the formation of phosphodiester linkages between 5'-phosphoryl and 3'-hydroxyl groups in double-stranded DNA using NAD as a coenzyme and as the energy source for the reaction. It is essential for DNA replication and repair of damaged DNA. In Bdellovibrio bacteriovorus (strain ATCC 15356 / DSM 50701 / NCIMB 9529 / HD100), this protein is DNA ligase.